Consider the following 243-residue polypeptide: Geranylgeranylglyceryl phosphate synthase (243 aa).

Positions 22 and 51 each coordinate Mg(2+). Sn-glycerol 1-phosphate contacts are provided by residues 169 to 175, 200 to 201, and 222 to 223; these read YLEAGSG, GG, and GT.

This sequence belongs to the GGGP/HepGP synthase family. Group II subfamily. The cofactor is Mg(2+).

Its subcellular location is the cytoplasm. The enzyme catalyses sn-glycerol 1-phosphate + (2E,6E,10E)-geranylgeranyl diphosphate = sn-3-O-(geranylgeranyl)glycerol 1-phosphate + diphosphate. It functions in the pathway membrane lipid metabolism; glycerophospholipid metabolism. In terms of biological role, prenyltransferase that catalyzes the transfer of the geranylgeranyl moiety of geranylgeranyl diphosphate (GGPP) to the C3 hydroxyl of sn-glycerol-1-phosphate (G1P). This reaction is the first ether-bond-formation step in the biosynthesis of archaeal membrane lipids. This chain is Geranylgeranylglyceryl phosphate synthase, found in Methanosphaera stadtmanae (strain ATCC 43021 / DSM 3091 / JCM 11832 / MCB-3).